A 236-amino-acid polypeptide reads, in one-letter code: Phosphoribosylaminoimidazole-succinocarboxamide synthase (236 aa).

This sequence belongs to the SAICAR synthetase family.

The catalysed reaction is 5-amino-1-(5-phospho-D-ribosyl)imidazole-4-carboxylate + L-aspartate + ATP = (2S)-2-[5-amino-1-(5-phospho-beta-D-ribosyl)imidazole-4-carboxamido]succinate + ADP + phosphate + 2 H(+). It participates in purine metabolism; IMP biosynthesis via de novo pathway; 5-amino-1-(5-phospho-D-ribosyl)imidazole-4-carboxamide from 5-amino-1-(5-phospho-D-ribosyl)imidazole-4-carboxylate: step 1/2. The chain is Phosphoribosylaminoimidazole-succinocarboxamide synthase from Streptococcus equi subsp. zooepidemicus (strain MGCS10565).